A 585-amino-acid polypeptide reads, in one-letter code: Glucose oxidase-like protein fsoC (585 aa).

Ala104 contributes to the FAD binding site. The Proton donor role is filled by His521. Catalysis depends on His564, which acts as the Proton acceptor.

This sequence belongs to the GMC oxidoreductase family. In terms of assembly, monomer. FAD is required as a cofactor.

Glucose oxidase-like protein; part of the gene cluster that mediates the biosynthesis of the enfumafungin-type antibiotic fuscoatroside. Four enzymes are sufficient to produce fuscoatroside: the terpene cyclase-glycosyl transferase fusion protein fsoAthe cytochrome P450 monoxygenases fsoD and fsoE, and the acetyltransferase fsoF; the cytochrome P450 monooxygenase fsoB and the glucose oxidase-like protein fsoC do not seem to play a role in biosynthesis of fuscoatroside. Its function is as follows. Glucose oxidase; part of the gene cluster that mediates the biosynthesis of the enfumafungin-type antibiotic, fuscoatroside. The chain is Glucose oxidase-like protein fsoC from Humicola fuscoatra.